Reading from the N-terminus, the 229-residue chain is Mannose-specific lectin TAR1 (229 aa).

The signal sequence occupies residues 1 to 23 (MAKLLLFLLPAILGLLIPRSAVA). 2 consecutive Bulb-type lectin domains span residues 26–131 (TNYL…PWVP) and 145–229 (DNLL…DYVL). Beta-D-mannose-binding positions include 51–55 (QNDCN), Tyr-59, Trp-63, Gln-64, 170–174 (QGDCN), Tyr-178, and 182–185 (YGWQ). A Carbohydrate-binding motif 1 motif is present at residues 51–59 (QNDCNLVLY). 2 cysteine pairs are disulfide-bonded: Cys-54/Cys-74 and Cys-173/Cys-195. Residues 170–178 (QGDCNLVLY) carry the Carbohydrate-binding motif 2 motif.

In terms of assembly, forms heterotetramer of 2 chains 1 and 2 chains 2 arranged as a dimer of chain 1 and chain 2 heterodimers.

It is found in the secreted. Mannose-specific lectin. Shows agglutinating activity towards erythrocytes from rabbit. This Colocasia esculenta (Wild taro) protein is Mannose-specific lectin TAR1.